Here is a 208-residue protein sequence, read N- to C-terminus: NADH-ubiquinone oxidoreductase chain 4 (208 aa).

The next 6 membrane-spanning stretches (helical) occupy residues 23–43 (VWIN…NLLW), 60–80 (PLSA…LLAS), 93–113 (KLYI…FSAN), 114–134 (ELIM…IIIT), 147–167 (IYFL…LIYI), and 185–205 (PINQ…AFMV).

The protein belongs to the complex I subunit 4 family. Core subunit of respiratory chain NADH dehydrogenase (Complex I) which is composed of 45 different subunits.

The protein localises to the mitochondrion inner membrane. It carries out the reaction a ubiquinone + NADH + 5 H(+)(in) = a ubiquinol + NAD(+) + 4 H(+)(out). In terms of biological role, core subunit of the mitochondrial membrane respiratory chain NADH dehydrogenase (Complex I) which catalyzes electron transfer from NADH through the respiratory chain, using ubiquinone as an electron acceptor. Essential for the catalytic activity and assembly of complex I. In Microtus pennsylvanicus (Meadow vole), this protein is NADH-ubiquinone oxidoreductase chain 4 (MT-ND4).